The sequence spans 107 residues: UPF0145 protein ETA_21660 (107 aa).

This sequence belongs to the UPF0145 family.

The polypeptide is UPF0145 protein ETA_21660 (Erwinia tasmaniensis (strain DSM 17950 / CFBP 7177 / CIP 109463 / NCPPB 4357 / Et1/99)).